The sequence spans 281 residues: Protein UL24 (281 aa).

Residues 199–252 (AVPPEPQTRRSRRRVAATARPQRPPSPTRDPEGTAGHPAPPESDPPSPGVVGVA) form a disordered region. Residues 236 to 246 (PAPPESDPPSP) are compositionally biased toward pro residues.

Belongs to the herpesviridae UL24 family.

It localises to the virion. It is found in the host cytoplasm. Its subcellular location is the host nucleus. The protein localises to the host nucleolus. The protein resides in the host Golgi apparatus. In terms of biological role, may participate in nuclear egress of viral particles. Plays a role in the dispersal of several host nucleolar proteins including NCL/nucleolin and NPM1. Since deletion of host NCL/nucleolin negatively impact on nuclear egress, UL24 supposedly acts on this process through its effect on host nucleoli. The chain is Protein UL24 from Human herpesvirus 2 (strain HG52) (HHV-2).